Consider the following 385-residue polypeptide: Multidrug resistance protein MdtE (385 aa).

The first 20 residues, 1 to 20, serve as a signal peptide directing secretion; sequence MNRRRKLLIPLLFCGAMLTA. The N-palmitoyl cysteine moiety is linked to residue Cys-21. Cys-21 carries the S-diacylglycerol cysteine lipid modification.

The protein belongs to the membrane fusion protein (MFP) (TC 8.A.1) family. Homotrimer. Part of the tripartite efflux system MdtEF-TolC, which is composed of an inner membrane transporter, MdtF, a membrane fusion protein, MdtE, and an outer membrane component, TolC. The complex forms a large protein conduit and can translocate molecules across both the inner and outer membranes.

It is found in the cell inner membrane. In terms of biological role, part of the tripartite efflux system MdtEF-TolC, which confers resistance to various compounds. This is Multidrug resistance protein MdtE (mdtE) from Escherichia coli O6:H1 (strain CFT073 / ATCC 700928 / UPEC).